We begin with the raw amino-acid sequence, 804 residues long: Leucine--tRNA ligase (804 aa).

A 'HIGH' region motif is present at residues 39–50 (PYPSGKGLHVGH). Positions 573-577 (KMSKS) match the 'KMSKS' region motif. Lys-576 is a binding site for ATP.

Belongs to the class-I aminoacyl-tRNA synthetase family.

The protein resides in the cytoplasm. The catalysed reaction is tRNA(Leu) + L-leucine + ATP = L-leucyl-tRNA(Leu) + AMP + diphosphate. The chain is Leucine--tRNA ligase from Lactobacillus delbrueckii subsp. bulgaricus (strain ATCC 11842 / DSM 20081 / BCRC 10696 / JCM 1002 / NBRC 13953 / NCIMB 11778 / NCTC 12712 / WDCM 00102 / Lb 14).